Reading from the N-terminus, the 976-residue chain is MERRWPLGLGLVLLLCAPLPPGARAKEVTLMDTSKAQGELGWLLDPPKDGWSEQQQILNGTPLYMYQDCPMQGRRDTDHWLRSNWIYRGEEASRVHVELQFTVRDCKSFPGGAGPLGCKETFNLLYMESDQDVGIQLRRPLFQKVTTVAADQSFTIRDLVSGSVKLNVERCSLGRLTRRGLYLAFHNPGACVALVSVRVFYQRCPETLNGLAQFPDTLPGPAGLVEVAGTCLPHARASPRPSGAPRMHCSPDGEWLVPVGRCHCEPGYEEGGSGEACVACPSGSYRMDMDTPHCLTCPQQSTAESEGATICTCESGHYRAPGEGPQVACTGPPSAPRNLSFSASGTQLSLRWEPPADTGGRQDVRYSVRCSQCQGTAQDGGPCQPCGVGVHFSPGARGLTTPAVHVNGLEPYANYTFNVEAQNGVSGLGSSGHASTSVSISMGHAESLSGLSLRLVKKEPRQLELTWAGSRPRSPGANLTYELHVLNQDEERYQMVLEPRVLLTELQPDTTYIVRVRMLTPLGPGPFSPDHEFRTSPPVSRGLTGGEIVAVIFGLLLGAALLLGILVFRSRRAQRQRQQRQRDRATDVDREDKLWLKPYVDLQAYEDPAQGALDFTRELDPAWLMVDTVIGEGEFGEVYRGTLRLPSQDCKTVAIKTLKDTSPGGQWWNFLREATIMGQFSHPHILHLEGVVTKRKPIMIITEFMENGALDAFLREREDQLVPGQLVAMLQGIASGMNYLSNHNYVHRDLAARNILVNQNLCCKVSDFGLTRLLDDFDGTYETQGGKIPIRWTAPEAIAHRIFTTASDVWSFGIVMWEVLSFGDKPYGEMSNQEVMKSIEDGYRLPPPVDCPAPLYELMKNCWAYDRARRPHFQKLQAHLEQLLANPHSLRTIANFDPRMTLRLPSLSGSDGIPYRTVSEWLESIRMKRYILHFHSAGLDTMECVLELTAEDLTQMGITLPGHQKRILCSIQGFKD.

The N-terminal stretch at 1-25 (MERRWPLGLGLVLLLCAPLPPGARA) is a signal peptide. Residues 26–547 (KEVTLMDTSK…PVSRGLTGGE (522 aa)) lie on the Extracellular side of the membrane. Residues 27–209 (EVTLMDTSKA…FYQRCPETLN (183 aa)) enclose the Eph LBD domain. Fibronectin type-III domains are found at residues 332 to 445 (PPSA…MGHA) and 447 to 538 (SLSG…TSPP). N414 is a glycosylation site (N-linked (GlcNAc...) asparagine). A helical transmembrane segment spans residues 548-568 (IVAVIFGLLLGAALLLGILVF). Over 569–976 (RSRRAQRQRQ…ILCSIQGFKD (408 aa)) the chain is Cytoplasmic. Phosphotyrosine; by autocatalysis is present on residues Y599 and Y605. The Protein kinase domain occupies 624-884 (LMVDTVIGEG…KLQAHLEQLL (261 aa)). Residues 630–638 (IGEGEFGEV) and K656 each bind ATP. D749 serves as the catalytic Proton acceptor. Y781 is subject to Phosphotyrosine; by autocatalysis. 2 positions are modified to phosphoserine: S906 and S910. The SAM domain occupies 913 to 976 (IPYRTVSEWL…ILCSIQGFKD (64 aa)). Y930 is subject to Phosphotyrosine; by autocatalysis. Residues 974-976 (FKD) carry the PDZ-binding motif.

Belongs to the protein kinase superfamily. Tyr protein kinase family. Ephrin receptor subfamily. As to quaternary structure, homodimer. Forms a signaling complex with LCK; PTK2B/PYK2 and PI3-kinase upon activation by EFNA1; regulates T-lymphocytes migration. Interacts (via SAM domain) with ILK (via ANK repeats); stimulated by EFNA1 but independent of the kinase activity of EPHA1. Interacts (kinase activity-dependent) with PTK2/FAK1. In terms of processing, phosphorylated. Autophosphorylation is stimulated by its ligand EFNA1. Post-translationally, ubiquitinated. As to expression, overexpressed in several carcinomas.

The protein resides in the cell membrane. It catalyses the reaction L-tyrosyl-[protein] + ATP = O-phospho-L-tyrosyl-[protein] + ADP + H(+). In terms of biological role, receptor tyrosine kinase which binds promiscuously membrane-bound ephrin-A family ligands residing on adjacent cells, leading to contact-dependent bidirectional signaling into neighboring cells. The signaling pathway downstream of the receptor is referred to as forward signaling while the signaling pathway downstream of the ephrin ligand is referred to as reverse signaling. Binds with a low affinity EFNA3 and EFNA4 and with a high affinity to EFNA1 which most probably constitutes its cognate/functional ligand. Upon activation by EFNA1 induces cell attachment to the extracellular matrix inhibiting cell spreading and motility through regulation of ILK and downstream RHOA and RAC. Also plays a role in angiogenesis and regulates cell proliferation. May play a role in apoptosis. In Homo sapiens (Human), this protein is Ephrin type-A receptor 1 (EPHA1).